The chain runs to 465 residues: ATP-dependent protease ATPase subunit HslU (465 aa).

Residues valine 18, 60–65 (GVGKTE), aspartate 277, glutamate 342, and arginine 414 contribute to the ATP site.

This sequence belongs to the ClpX chaperone family. HslU subfamily. As to quaternary structure, a double ring-shaped homohexamer of HslV is capped on each side by a ring-shaped HslU homohexamer. The assembly of the HslU/HslV complex is dependent on binding of ATP.

The protein localises to the cytoplasm. Functionally, ATPase subunit of a proteasome-like degradation complex; this subunit has chaperone activity. The binding of ATP and its subsequent hydrolysis by HslU are essential for unfolding of protein substrates subsequently hydrolyzed by HslV. HslU recognizes the N-terminal part of its protein substrates and unfolds these before they are guided to HslV for hydrolysis. The chain is ATP-dependent protease ATPase subunit HslU from Caldicellulosiruptor saccharolyticus (strain ATCC 43494 / DSM 8903 / Tp8T 6331).